Reading from the N-terminus, the 179-residue chain is Large ribosomal subunit protein uL6 (179 aa).

The protein belongs to the universal ribosomal protein uL6 family. In terms of assembly, part of the 50S ribosomal subunit.

This protein binds to the 23S rRNA, and is important in its secondary structure. It is located near the subunit interface in the base of the L7/L12 stalk, and near the tRNA binding site of the peptidyltransferase center. In Streptomyces avermitilis (strain ATCC 31267 / DSM 46492 / JCM 5070 / NBRC 14893 / NCIMB 12804 / NRRL 8165 / MA-4680), this protein is Large ribosomal subunit protein uL6.